The primary structure comprises 416 residues: Gamma-glutamyl phosphate reductase (416 aa).

It belongs to the gamma-glutamyl phosphate reductase family.

It localises to the cytoplasm. It carries out the reaction L-glutamate 5-semialdehyde + phosphate + NADP(+) = L-glutamyl 5-phosphate + NADPH + H(+). Its pathway is amino-acid biosynthesis; L-proline biosynthesis; L-glutamate 5-semialdehyde from L-glutamate: step 2/2. In terms of biological role, catalyzes the NADPH-dependent reduction of L-glutamate 5-phosphate into L-glutamate 5-semialdehyde and phosphate. The product spontaneously undergoes cyclization to form 1-pyrroline-5-carboxylate. The protein is Gamma-glutamyl phosphate reductase of Salmonella paratyphi A (strain AKU_12601).